We begin with the raw amino-acid sequence, 716 residues long: Hepatocyte growth factor-like protein (716 aa).

An N-terminal signal peptide occupies residues 1–18 (MGWLPLLLLLVQCSRALG). Positions 19–105 (QRSPLNDFQL…SLCHLFQKKD (87 aa)) constitute a PAN domain. Cystine bridges form between Cys56-Cys78, Cys60-Cys66, Cys110-Cys186, Cys131-Cys169, Cys157-Cys181, Cys191-Cys268, Cys194-Cys333, Cys212-Cys251, Cys240-Cys263, Cys292-Cys370, Cys313-Cys352, Cys341-Cys364, Cys379-Cys457, Cys400-Cys440, Cys428-Cys452, Cys477-Cys593, Cys512-Cys528, Cys607-Cys672, Cys637-Cys651, and Cys662-Cys690. Residue Asn72 is glycosylated (N-linked (GlcNAc...) asparagine). Kringle domains lie at 110-186 (CIMD…IKTC), 191-268 (CVLC…LPSC), 292-370 (CFRG…IPRC), and 379-457 (CYHG…LQRC). N-linked (GlcNAc...) asparagine glycosylation occurs at Asn173. A glycan (N-linked (GlcNAc...) asparagine) is linked at Asn305. The Peptidase S1 domain maps to 489–714 (VVGGHPGNSP…FVDWINKVMQ (226 aa)). A glycan (N-linked (GlcNAc...) asparagine) is linked at Asn620.

The protein belongs to the peptidase S1 family. Plasminogen subfamily. As to quaternary structure, dimer of an alpha chain and a beta chain linked by a disulfide bond. Interacts (via beta chain) with MST1R (via SEMA domain). Cleaved after Arg-488, probably by HPN/Hepsin, to yield the active form consisting of two disulfide-linked chains. As to expression, liver. Lower levels in lung, placenta and adrenal.

Its subcellular location is the secreted. The chain is Hepatocyte growth factor-like protein (Mst1) from Mus musculus (Mouse).